The primary structure comprises 560 residues: Chaperonin GroEL 2 (560 aa).

ATP contacts are provided by residues 29–32 (TLGP), 86–90 (DGTTT), Gly413, 478–480 (NAA), and Asp494.

It belongs to the chaperonin (HSP60) family. As to quaternary structure, forms a cylinder of 14 subunits composed of two heptameric rings stacked back-to-back. Interacts with the co-chaperonin GroES.

It is found in the cytoplasm. The enzyme catalyses ATP + H2O + a folded polypeptide = ADP + phosphate + an unfolded polypeptide.. In terms of biological role, together with its co-chaperonin GroES, plays an essential role in assisting protein folding. The GroEL-GroES system forms a nano-cage that allows encapsulation of the non-native substrate proteins and provides a physical environment optimized to promote and accelerate protein folding. This Nostoc sp. (strain PCC 7120 / SAG 25.82 / UTEX 2576) protein is Chaperonin GroEL 2.